The chain runs to 103 residues: Small ribosomal subunit protein uS10 (103 aa).

This sequence belongs to the universal ribosomal protein uS10 family. In terms of assembly, part of the 30S ribosomal subunit.

Involved in the binding of tRNA to the ribosomes. The protein is Small ribosomal subunit protein uS10 of Hydrogenovibrio crunogenus (strain DSM 25203 / XCL-2) (Thiomicrospira crunogena).